The following is a 246-amino-acid chain: Probable transcriptional regulatory protein COSY_0365 (246 aa).

It belongs to the TACO1 family.

It localises to the cytoplasm. The sequence is that of Probable transcriptional regulatory protein COSY_0365 from Vesicomyosocius okutanii subsp. Calyptogena okutanii (strain HA).